Reading from the N-terminus, the 1177-residue chain is DNA-directed RNA polymerase subunit beta (1177 aa).

Residues 1147-1161 (DDTEIEMRDTEDDDD) show a composition bias toward acidic residues. The disordered stretch occupies residues 1147-1177 (DDTEIEMRDTEDDDDHQSADKLNVEVETTKE). Over residues 1162 to 1177 (HQSADKLNVEVETTKE) the composition is skewed to basic and acidic residues.

It belongs to the RNA polymerase beta chain family. In terms of assembly, the RNAP catalytic core consists of 2 alpha, 1 beta, 1 beta' and 1 omega subunit. When a sigma factor is associated with the core the holoenzyme is formed, which can initiate transcription.

The enzyme catalyses RNA(n) + a ribonucleoside 5'-triphosphate = RNA(n+1) + diphosphate. In terms of biological role, DNA-dependent RNA polymerase catalyzes the transcription of DNA into RNA using the four ribonucleoside triphosphates as substrates. The polypeptide is DNA-directed RNA polymerase subunit beta (Bacillus cereus (strain G9842)).